A 169-amino-acid chain; its full sequence is Ubiquitin-fold modifier-conjugating enzyme 1 (169 aa).

Cys116 acts as the Glycyl thioester intermediate in catalysis.

It belongs to the ubiquitin-conjugating enzyme family. UFC1 subfamily.

Functionally, E2-like enzyme which forms an intermediate with UFM1 via a thioester linkage. The chain is Ubiquitin-fold modifier-conjugating enzyme 1 from Branchiostoma floridae (Florida lancelet).